Reading from the N-terminus, the 960-residue chain is Phosphoenolpyruvate carboxylase 2 (960 aa).

Active-site residues include His-167 and Lys-595.

This sequence belongs to the PEPCase type 1 family. In terms of assembly, homotetramer. Mg(2+) is required as a cofactor.

It is found in the cytoplasm. The enzyme catalyses oxaloacetate + phosphate = phosphoenolpyruvate + hydrogencarbonate. The protein operates within photosynthesis; C3 acid pathway. In terms of biological role, through the carboxylation of phosphoenolpyruvate (PEP) it forms oxaloacetate, a four-carbon dicarboxylic acid source for the tricarboxylic acid cycle. The chain is Phosphoenolpyruvate carboxylase 2 from Sorghum bicolor (Sorghum).